The following is a 614-amino-acid chain: Dolichyl-diphosphooligosaccharide--protein glycosyltransferase subunit 1A (614 aa).

Residues M1–S25 form the signal peptide. Residues D26–N432 lie on the Lumenal side of the membrane. N-linked (GlcNAc...) asparagine glycans are attached at residues N94 and N299. K311 participates in a covalent cross-link: Glycyl lysine isopeptide (Lys-Gly) (interchain with G-Cter in ubiquitin). N352 is a glycosylation site (N-linked (GlcNAc...) asparagine). A helical transmembrane segment spans residues L433–I453. Residues Y454–I614 are Cytoplasmic-facing.

Belongs to the OST1 family. Component of the oligosaccharyltransferase (OST) complex.

The protein localises to the endoplasmic reticulum membrane. The protein operates within protein modification; protein glycosylation. Subunit of the oligosaccharyl transferase (OST) complex that catalyzes the initial transfer of a defined glycan (Glc(3)Man(9)GlcNAc(2) in eukaryotes) from the lipid carrier dolichol-pyrophosphate to an asparagine residue within an Asn-X-Ser/Thr consensus motif in nascent polypeptide chains, the first step in protein N-glycosylation. N-glycosylation occurs cotranslationally and the complex associates with the Sec61 complex at the channel-forming translocon complex that mediates protein translocation across the endoplasmic reticulum (ER). All subunits are required for a maximal enzyme activity. The chain is Dolichyl-diphosphooligosaccharide--protein glycosyltransferase subunit 1A (OST1A) from Arabidopsis thaliana (Mouse-ear cress).